A 591-amino-acid polypeptide reads, in one-letter code: V-type ATP synthase alpha chain (591 aa).

233-240 lines the ATP pocket; sequence GPFGAGKT.

Belongs to the ATPase alpha/beta chains family.

It carries out the reaction ATP + H2O + 4 H(+)(in) = ADP + phosphate + 5 H(+)(out). Produces ATP from ADP in the presence of a proton gradient across the membrane. The V-type alpha chain is a catalytic subunit. The sequence is that of V-type ATP synthase alpha chain from Streptococcus pneumoniae (strain Hungary19A-6).